Here is a 445-residue protein sequence, read N- to C-terminus: Putative ATP-dependent RNA helicase L538 (445 aa).

In terms of domain architecture, Helicase ATP-binding spans Ile14–Glu151. Residue His27–Thr34 coordinates ATP. Positions Asp101–His104 match the DEAH box motif. One can recognise a Helicase C-terminal domain in the interval Lys273–Tyr442.

It belongs to the DEAD box helicase family. DEAH subfamily.

It localises to the virion. It carries out the reaction ATP + H2O = ADP + phosphate + H(+). In Acanthamoeba polyphaga mimivirus (APMV), this protein is Putative ATP-dependent RNA helicase L538.